A 393-amino-acid polypeptide reads, in one-letter code: NAD(P)H-quinone oxidoreductase subunit H, chloroplastic (393 aa).

The protein belongs to the complex I 49 kDa subunit family. As to quaternary structure, NDH is composed of at least 16 different subunits, 5 of which are encoded in the nucleus.

Its subcellular location is the plastid. It is found in the chloroplast thylakoid membrane. It catalyses the reaction a plastoquinone + NADH + (n+1) H(+)(in) = a plastoquinol + NAD(+) + n H(+)(out). The enzyme catalyses a plastoquinone + NADPH + (n+1) H(+)(in) = a plastoquinol + NADP(+) + n H(+)(out). Functionally, NDH shuttles electrons from NAD(P)H:plastoquinone, via FMN and iron-sulfur (Fe-S) centers, to quinones in the photosynthetic chain and possibly in a chloroplast respiratory chain. The immediate electron acceptor for the enzyme in this species is believed to be plastoquinone. Couples the redox reaction to proton translocation, and thus conserves the redox energy in a proton gradient. The chain is NAD(P)H-quinone oxidoreductase subunit H, chloroplastic from Lepidium virginicum (Virginia pepperweed).